The chain runs to 200 residues: Pre-mRNA cleavage factor Im 25 kDa subunit 2 (200 aa).

The 128-residue stretch at 45–172 folds into the Nudix hydrolase domain; sequence GMRTSVEGIL…KLLAVPLFEL (128 aa). Positions 72-74 are interaction with RNA; that stretch reads TFC. A Nudix box motif is present at residues 79–100; that stretch reads GRLKPGENEADGLKRKLTSKLG.

The protein belongs to the Nudix hydrolase family. CPSF5 subfamily. Homodimer. Component of the cleavage factor Im (CFIm) complex. Forms a complex with cleavage and polyadenylation specificity factor (CPSF) subunits FIPS5, PAPS4 and CPSF30.

The protein localises to the nucleus. In terms of biological role, component of the cleavage factor Im (CFIm) complex that plays a key role in pre-mRNA 3'-processing. Involved in association with CPSF6 or CPSF7 in pre-MRNA 3'-end poly(A) site cleavage and poly(A) addition. NUDT21/CPSF5 binds to cleavage and polyadenylation RNA substrates. The homodimer mediates simultaneous sequence-specific recognition of two 5'-UGUA-3' elements within the pre-mRNA. Binds to, but does not hydrolyze mono- and di-adenosine nucleotides. May have a role in mRNA export. This chain is Pre-mRNA cleavage factor Im 25 kDa subunit 2, found in Arabidopsis thaliana (Mouse-ear cress).